Here is a 768-residue protein sequence, read N- to C-terminus: cGMP-dependent protein kinase, isozyme 1 (768 aa).

The segment at 1 to 192 is regulatory; that stretch reads MAAGMLTDRE…NDFLKNIDAS (192 aa). The segment covering 114–127 has biased composition (low complexity); that stretch reads PLASTSSASPSGRT. Residues 114–134 are disordered; that stretch reads PLASTSSASPSGRTSADEVRP. 3',5'-cyclic GMP-binding positions include 249-252, 259-260, R366, 375-378, 385-386, and Y421; these read GELA, RT, and GEQA. One can recognise a Protein kinase domain in the interval 457 to 717; it reads LEVVSTLGIG…IQDIKKHKWF (261 aa). ATP-binding positions include 463-471 and K488; that span reads LGIGGFGRV. The active-site Proton acceptor is the D582. In terms of domain architecture, AGC-kinase C-terminal spans 718-768; the sequence is LGFDWDGLASQLLIPPFVRPIAHPTDVRYFDRFPCDLNEPPDELSGWDADF.

It belongs to the protein kinase superfamily. AGC Ser/Thr protein kinase family. cGMP subfamily. As to quaternary structure, homodimer. Mg(2+) serves as cofactor. Autophosphorylated. In embryo stage 13, expression is seen in a few large, irregular cells having the appearance of hemocytes or macrophages. In adults, expression is seen in optic lamina and weakly in testis.

The catalysed reaction is L-seryl-[protein] + ATP = O-phospho-L-seryl-[protein] + ADP + H(+). It carries out the reaction L-threonyl-[protein] + ATP = O-phospho-L-threonyl-[protein] + ADP + H(+). Binding of cGMP results in enzyme activation. The polypeptide is cGMP-dependent protein kinase, isozyme 1 (Pkg21D) (Drosophila melanogaster (Fruit fly)).